Here is a 302-residue protein sequence, read N- to C-terminus: Succinate--CoA ligase [ADP-forming] subunit alpha (302 aa).

Residues T17–T20, K43, and I96–E98 contribute to the CoA site. Y159 serves as a coordination point for substrate. H247 serves as the catalytic Tele-phosphohistidine intermediate.

This sequence belongs to the succinate/malate CoA ligase alpha subunit family. Heterotetramer of two alpha and two beta subunits.

The enzyme catalyses succinate + ATP + CoA = succinyl-CoA + ADP + phosphate. The catalysed reaction is GTP + succinate + CoA = succinyl-CoA + GDP + phosphate. Its pathway is carbohydrate metabolism; tricarboxylic acid cycle; succinate from succinyl-CoA (ligase route): step 1/1. In terms of biological role, succinyl-CoA synthetase functions in the citric acid cycle (TCA), coupling the hydrolysis of succinyl-CoA to the synthesis of either ATP or GTP and thus represents the only step of substrate-level phosphorylation in the TCA. The alpha subunit of the enzyme binds the substrates coenzyme A and phosphate, while succinate binding and nucleotide specificity is provided by the beta subunit. This is Succinate--CoA ligase [ADP-forming] subunit alpha from Staphylococcus aureus (strain MRSA252).